The sequence spans 476 residues: NADH-quinone oxidoreductase subunit N (476 aa).

Transmembrane regions (helical) follow at residues 10–30, 42–62, 77–97, 108–128, 129–149, 162–182, 202–222, 234–254, 268–288, 296–316, 323–343, 368–388, 392–412, and 445–465; these read AVLP…IGAI, LAIA…AVTI, FMKV…VDWL, AVLV…GDLI, ALYL…AINR, FVLG…IYGF, LVFG…AVPF, PTPV…AVFV, WQQI…FAAI, LLAY…AAGT, VLLY…CVLA, ALAL…AGFV, YVFL…GVVA, and AVLA…TPLI.

The protein belongs to the complex I subunit 2 family. NDH-1 is composed of 14 different subunits. Subunits NuoA, H, J, K, L, M, N constitute the membrane sector of the complex.

It localises to the cell inner membrane. It carries out the reaction a quinone + NADH + 5 H(+)(in) = a quinol + NAD(+) + 4 H(+)(out). In terms of biological role, NDH-1 shuttles electrons from NADH, via FMN and iron-sulfur (Fe-S) centers, to quinones in the respiratory chain. The immediate electron acceptor for the enzyme in this species is believed to be ubiquinone. Couples the redox reaction to proton translocation (for every two electrons transferred, four hydrogen ions are translocated across the cytoplasmic membrane), and thus conserves the redox energy in a proton gradient. This chain is NADH-quinone oxidoreductase subunit N, found in Azorhizobium caulinodans (strain ATCC 43989 / DSM 5975 / JCM 20966 / LMG 6465 / NBRC 14845 / NCIMB 13405 / ORS 571).